Reading from the N-terminus, the 1616-residue chain is MAYTQTATTSALLDTVRGNNSLVNDLAKRRLYDTAVEEFNARDRRPKVNFSKVISEEQTLIATRAYPEFQITFYNTQNAVHSLAGGLRSLELEYLMMQIPYGSLTYDIGGNFASHLFKGRAYVHCCMPNLDVRDIMRHEGQKDSIELYLSRLERGGKTVPNFQKEAFDRYAEIPEDAVCHNTFQTCEHQPMQQSGRVYAIALHSIYDIPADEFGAALLRKNVHTCYAAFHFSENLLLEDSYVNLDEINACFSRDGDKLTFSFASESTLNYCHSYSNILKYVCKTYFPASNREVYMKEFLVTRVNTWFCKFSRIDTFLLYKGVAHKSVDSEQFYTAMEDAWHYKKTLAMCNSERILLEDSSSVNYWFPKMRDMVIVPLFDISLETSKRTRKEVLVSKDFVFTVLNHIRTYQAKALTYANVLSFVESIRSRVIINGVTARSEWDVDKSLLQSLSMTFYLHTKLAVLKDDLLISKFSLGSKTVCQHVWDEISLAFGNAFPSVKERLLNRKLIRVAGDALEIRVPDLYVTFHDRLVTEYKASVDMPALDIRKKMEETEVMYNALSELSVLRESDKFDVDVFSQMCQSLEVDPMTAAKVIVAVMSNESGLTLTFERPTEANVALALQDQEKASEGALVVTSREVEEPSMKGSMARGELQLAGLAGDHPESSYSRNEEIESLEQFHMATADSLIRKQMSSIVYTGPIKVQQMKNFIDSLVASLSAAVSNLVKILKDTAAIDLETRQKFGVLDVASRKWLIKPTAKSHAWGVVETHARKYHVALLEYDEQGVVTCDDWRRVAVSSESVVYSDMAKLRTLRRLLRNGEPHVSSAKVVLVDGVPGCGKTKEILSRVNFDEDLILVPGKQAAEMIRRRANSSGIIVATKDNVKTVDSFMMNFGKSTRCQFKRLFIDEGLMLHTGCVNFLVAMSLCEIAYVYGDTQQIPYINRVSGFPYPAHFAKLEVDEVETRRTTLRCPADVTHYLNRRYEGFVMSTSSVKKSVSQEMVGGAAVINPISKPLHGKILTFTQSDKEALLSRGYSDVHTVHEVQGETYSDVSLVRLTPTPVSIIAGDSPHVLVALSRHTCSLKYYTVVMDPLVSIIRDLEKLSSYLLDMYKVDAGTQXQLQIDSVFKGSNLFVAAPKTGDISDMQFYYDKCLPGNSTMMNNFDAVTMRLTDISLNVKDCILDMSKSVAAPKDQIKPLTPMVRTAAEMPRQTGLLENLVAMIKRNFNAPELSGIIDIENTASLVVDKFFDSYLLKEKRKPNKNVSLFSRESLNRWLEKQEQVTIGQLADFDFVDLPAVDQYRHMIKAQPKQKLDTSIQTEYPALQTIVYHSKKINAIFGPLFSELTRQLLDSVDSSRFLFFTRKTPAQIEDFFGDLDSHVPMDVLELDISKYDKSQNEFHCAVEYEIWRRLGFEDFLGEVWKQGHRKTTLKDYTAGIKTCIWYQRKSGDVTTFIGNTVIIAACLASMLPMEKIIKGAFCGDDSLLYFPKGCEFPDVQHSANLMWNFEAKLFKKQYGYFCGRYVIHHDRGCIVYYDPLKLISKLGAKHIKDWEHLEEFRRSLCDVAVSLNNCAYYTQLDDAVREVHKTAPPGSFVYKSLVKFLSDKVLFRSLFIDGSSC.

The methyltransferase stretch occupies residues 50–458 (FSKVISEEQT…QSLSMTFYLH (409 aa)). The region spanning 72-281 (TFYNTQNAVH…HSYSNILKYV (210 aa)) is the Alphavirus-like MT domain. The 163-residue stretch at 801–963 (VVYSDMAKLR…KLEVDEVETR (163 aa)) folds into the (+)RNA virus helicase ATP-binding domain. The interval 830 to 1085 (LVDGVPGCGK…RHTCSLKYYT (256 aa)) is helicase. Residue 833-840 (GVPGCGKT) coordinates ATP. The (+)RNA virus helicase C-terminal domain maps to 964–1116 (RTTLRCPADV…DMYKVDAGTQ (153 aa)). The 114-residue stretch at 1380–1493 (MDVLELDISK…YFPKGCEFPD (114 aa)) folds into the RdRp catalytic domain.

It belongs to the ssRNA positive-strand viruses RNA-directed RNA polymerase family. As to quaternary structure, heterodimer of a large and a small subunit.

It catalyses the reaction RNA(n) + a ribonucleoside 5'-triphosphate = RNA(n+1) + diphosphate. The catalysed reaction is ATP + H2O = ADP + phosphate + H(+). Is an RNA-dependent RNA polymerase active in viral RNA replication. In terms of biological role, is a methyltransferase active in RNA capping and an RNA helicase. Methyltransferase displays a cytoplasmic capping enzyme activity. This function is necessary since all viral RNAs are synthesized in the cytoplasm, and host capping enzymes are restricted to the nucleus. Helicase region probably exhibits NTPase and RNA unwinding activities (Potential). It also acts as a suppressor of RNA-mediated gene silencing, also known as post-transcriptional gene silencing (PTGS), a mechanism of plant viral defense that limits the accumulation of viral RNAs. May mediate silencing suppression through either inhibition of HEN1-mediated siRNA or siRNA demethylation. This Nicotiana tabacum (Common tobacco) protein is Replicase large subunit.